A 473-amino-acid chain; its full sequence is MESFTADTNSTDLHSRPLFKPQDIASMVILSLTCLLGLPGNGLVLWVAGVKMKRTVNTVWFLHLTLADFLCCLSLPFSVAHLILRGHWPYGLFLCKLIPSVIILNMFASVFLLTAISLDRCLMVHKPIWCQNHRSVRTAFAVCGCVWVVTFVMCIPVFVYRDLLVVDDYSVCGYNFDSSRAYDYWDYMYNSHLPEINPPDNSTGHVDDRTAPSSSVPARDLWTATTALQSQTFHTSPEDPFSQDSASQQPHYGGKPPTVLIATIPGGFPVEDHKSNTLNTGAFLSAHTEPSLTASSSPLYAHDFPDDYFDQLMYGNHAWTPQVAITISRLVVGFLVPFFIMITCYSLIVFRMRKTNLTKSRNKTLRVAVAVVTVFFVCWIPYHIVGILLVITDQESALREVVLPWDHMSIALASANSCFNPFLYALLGKDFRKKARQSVKGILEAAFSEELTHSTSCTQDKAPSKRNHMSTDV.

The Extracellular segment spans residues 1–23 (MESFTADTNSTDLHSRPLFKPQD). Residue Asn-9 is glycosylated (N-linked (GlcNAc...) asparagine). Residues 24–46 (IASMVILSLTCLLGLPGNGLVLW) form a helical membrane-spanning segment. At 47–57 (VAGVKMKRTVN) the chain is on the cytoplasmic side. A helical membrane pass occupies residues 58-80 (TVWFLHLTLADFLCCLSLPFSVA). The Extracellular portion of the chain corresponds to 81–96 (HLILRGHWPYGLFLCK). A disulfide bond links Cys-95 and Cys-172. A helical membrane pass occupies residues 97–118 (LIPSVIILNMFASVFLLTAISL). Over 119–139 (DRCLMVHKPIWCQNHRSVRTA) the chain is Cytoplasmic. Residues 140-160 (FAVCGCVWVVTFVMCIPVFVY) form a helical membrane-spanning segment. At 161–329 (RDLLVVDDYS…TPQVAITISR (169 aa)) the chain is on the extracellular side. Residues Tyr-174 and Tyr-184 each carry the sulfotyrosine modification. Asn-201 carries an N-linked (GlcNAc...) asparagine glycan. The disordered stretch occupies residues 233 to 252 (FHTSPEDPFSQDSASQQPHY). At Tyr-308 the chain carries Sulfotyrosine. A helical transmembrane segment spans residues 330-349 (LVVGFLVPFFIMITCYSLIV). The Cytoplasmic portion of the chain corresponds to 350–366 (FRMRKTNLTKSRNKTLR). Residues 367–389 (VAVAVVTVFFVCWIPYHIVGILL) traverse the membrane as a helical segment. At 390–406 (VITDQESALREVVLPWD) the chain is on the extracellular side. Residues 407–427 (HMSIALASANSCFNPFLYALL) traverse the membrane as a helical segment. The Cytoplasmic segment spans residues 428–473 (GKDFRKKARQSVKGILEAAFSEELTHSTSCTQDKAPSKRNHMSTDV). Residue Ser-448 is modified to Phosphoserine. At Thr-452 the chain carries Phosphothreonine.

Belongs to the G-protein coupled receptor 1 family. As to quaternary structure, interacts with VGF-derived peptide TLQP-21.

The protein localises to the cell membrane. Its function is as follows. Receptor for the chemotactic and inflammatory peptide anaphylatoxin C3a. This receptor stimulates chemotaxis, granule enzyme release and superoxide anion production. This is C3a anaphylatoxin chemotactic receptor (C3ar1) from Rattus norvegicus (Rat).